The sequence spans 429 residues: D-amino acid dehydrogenase (429 aa).

FAD is bound at residue 3–17 (VLILGSGVIGVTSAW).

The protein belongs to the DadA oxidoreductase family. FAD is required as a cofactor.

It catalyses the reaction a D-alpha-amino acid + A + H2O = a 2-oxocarboxylate + AH2 + NH4(+). It functions in the pathway amino-acid degradation; D-alanine degradation; NH(3) and pyruvate from D-alanine: step 1/1. Functionally, oxidative deamination of D-amino acids. This Xanthomonas euvesicatoria pv. vesicatoria (strain 85-10) (Xanthomonas campestris pv. vesicatoria) protein is D-amino acid dehydrogenase.